A 606-amino-acid polypeptide reads, in one-letter code: DNA ligase (606 aa).

ATP is bound at residue glutamate 263. Lysine 265 serves as the catalytic N6-AMP-lysine intermediate. Residues arginine 270, arginine 285, glutamate 315, phenylalanine 355, arginine 432, and lysine 438 each coordinate ATP.

Belongs to the ATP-dependent DNA ligase family. Mg(2+) serves as cofactor. Mn(2+) is required as a cofactor.

It catalyses the reaction ATP + (deoxyribonucleotide)n-3'-hydroxyl + 5'-phospho-(deoxyribonucleotide)m = (deoxyribonucleotide)n+m + AMP + diphosphate.. The enzyme catalyses ADP + (deoxyribonucleotide)n-3'-hydroxyl + 5'-phospho-(deoxyribonucleotide)m = (deoxyribonucleotide)n+m + AMP + phosphate.. The catalysed reaction is GTP + (deoxyribonucleotide)n-3'-hydroxyl + 5'-phospho-(deoxyribonucleotide)m = (deoxyribonucleotide)n+m + GMP + diphosphate.. Functionally, DNA ligase that seals nicks in double-stranded DNA during DNA replication, DNA recombination and DNA repair. Can use ATP, ADP and GTP, but not CTP, TTP or NAD(+). The sequence is that of DNA ligase from Sulfophobococcus zilligii.